A 211-amino-acid chain; its full sequence is Vascular-related unknown protein 1 (211 aa).

Residues 1-12 show a composition bias toward polar residues; that stretch reads MMDTFSCNSYEQ. A disordered region spans residues 1-40; that stretch reads MMDTFSCNSYEQNHPHDDDIDIDAHDHDSHGGDHQEESGW. Residues 13-37 are compositionally biased toward basic and acidic residues; it reads NHPHDDDIDIDAHDHDSHGGDHQEE.

As to expression, expressed in vascular tissues of cotyledons, rosette leaves, sepals, petals, anther filaments. Expressed in roots, inflorescence stems and developing seeds.

The protein localises to the cytoplasm. Its subcellular location is the nucleus. Its function is as follows. Involved in the regulation of xylem development and growth. May regulate secondary wall formation during vascular development by modulation of brassinosteroid, gibberellin and auxin hormone signaling pathways. The sequence is that of Vascular-related unknown protein 1 from Arabidopsis thaliana (Mouse-ear cress).